A 307-amino-acid polypeptide reads, in one-letter code: Pseudouridine-5'-phosphate glycosidase (307 aa).

Catalysis depends on glutamate 28, which acts as the Proton donor. Residues lysine 89 and valine 109 each contribute to the substrate site. Position 141 (aspartate 141) interacts with Mn(2+). 143–145 serves as a coordination point for substrate; sequence SAD. The Nucleophile role is filled by lysine 162.

The protein belongs to the pseudouridine-5'-phosphate glycosidase family. Homotrimer. The cofactor is Mn(2+).

It catalyses the reaction D-ribose 5-phosphate + uracil = psi-UMP + H2O. Catalyzes the reversible cleavage of pseudouridine 5'-phosphate (PsiMP) to ribose 5-phosphate and uracil. Functions biologically in the cleavage direction, as part of a pseudouridine degradation pathway. The sequence is that of Pseudouridine-5'-phosphate glycosidase from Staphylococcus aureus (strain MW2).